The following is a 388-amino-acid chain: LL-diaminopimelate aminotransferase (388 aa).

Substrate contacts are provided by tyrosine 16 and glycine 41. Pyridoxal 5'-phosphate is bound by residues tyrosine 70, 104 to 105 (SK), tyrosine 129, asparagine 179, tyrosine 210, and 239 to 241 (SLS). Lysine 105, tyrosine 129, and asparagine 179 together coordinate substrate. At lysine 242 the chain carries N6-(pyridoxal phosphate)lysine. Position 250 (arginine 250) interacts with pyridoxal 5'-phosphate. Residue arginine 368 participates in substrate binding.

It belongs to the class-I pyridoxal-phosphate-dependent aminotransferase family. LL-diaminopimelate aminotransferase subfamily. Homodimer. It depends on pyridoxal 5'-phosphate as a cofactor.

It carries out the reaction (2S,6S)-2,6-diaminopimelate + 2-oxoglutarate = (S)-2,3,4,5-tetrahydrodipicolinate + L-glutamate + H2O + H(+). It participates in amino-acid biosynthesis; L-lysine biosynthesis via DAP pathway; LL-2,6-diaminopimelate from (S)-tetrahydrodipicolinate (aminotransferase route): step 1/1. In terms of biological role, involved in the synthesis of meso-diaminopimelate (m-DAP or DL-DAP), required for both lysine and peptidoglycan biosynthesis. Catalyzes the direct conversion of tetrahydrodipicolinate to LL-diaminopimelate. The chain is LL-diaminopimelate aminotransferase from Maridesulfovibrio salexigens (strain ATCC 14822 / DSM 2638 / NCIMB 8403 / VKM B-1763) (Desulfovibrio salexigens).